A 213-amino-acid chain; its full sequence is Orotate phosphoribosyltransferase (213 aa).

Residue K26 participates in 5-phospho-alpha-D-ribose 1-diphosphate binding. 34 to 35 is an orotate binding site; it reads FF. Residues 72-73, R99, K100, K103, H105, and 124-132 contribute to the 5-phospho-alpha-D-ribose 1-diphosphate site; these read YK and DDVITAGTA. Orotate-binding residues include T128 and R156.

Belongs to the purine/pyrimidine phosphoribosyltransferase family. PyrE subfamily. In terms of assembly, homodimer. It depends on Mg(2+) as a cofactor.

It catalyses the reaction orotidine 5'-phosphate + diphosphate = orotate + 5-phospho-alpha-D-ribose 1-diphosphate. It functions in the pathway pyrimidine metabolism; UMP biosynthesis via de novo pathway; UMP from orotate: step 1/2. In terms of biological role, catalyzes the transfer of a ribosyl phosphate group from 5-phosphoribose 1-diphosphate to orotate, leading to the formation of orotidine monophosphate (OMP). The chain is Orotate phosphoribosyltransferase from Vibrio vulnificus (strain YJ016).